Here is a 238-residue protein sequence, read N- to C-terminus: Purine nucleoside phosphorylase DeoD-type (238 aa).

His4 is an a purine D-ribonucleoside binding site. Phosphate is bound by residues Gly20, Arg24, Arg43, and 87-90 (RVGS). A purine D-ribonucleoside-binding positions include 179 to 181 (EME) and 203 to 204 (SD). Catalysis depends on Asp204, which acts as the Proton donor.

The protein belongs to the PNP/UDP phosphorylase family. As to quaternary structure, homohexamer; trimer of homodimers.

It carries out the reaction a purine D-ribonucleoside + phosphate = a purine nucleobase + alpha-D-ribose 1-phosphate. It catalyses the reaction a purine 2'-deoxy-D-ribonucleoside + phosphate = a purine nucleobase + 2-deoxy-alpha-D-ribose 1-phosphate. Its function is as follows. Catalyzes the reversible phosphorolytic breakdown of the N-glycosidic bond in the beta-(deoxy)ribonucleoside molecules, with the formation of the corresponding free purine bases and pentose-1-phosphate. This Histophilus somni (strain 2336) (Haemophilus somnus) protein is Purine nucleoside phosphorylase DeoD-type.